The primary structure comprises 233 residues: 2-C-methyl-D-erythritol 4-phosphate cytidylyltransferase (233 aa).

Belongs to the IspD/TarI cytidylyltransferase family. IspD subfamily.

The catalysed reaction is 2-C-methyl-D-erythritol 4-phosphate + CTP + H(+) = 4-CDP-2-C-methyl-D-erythritol + diphosphate. It participates in isoprenoid biosynthesis; isopentenyl diphosphate biosynthesis via DXP pathway; isopentenyl diphosphate from 1-deoxy-D-xylulose 5-phosphate: step 2/6. Its function is as follows. Catalyzes the formation of 4-diphosphocytidyl-2-C-methyl-D-erythritol from CTP and 2-C-methyl-D-erythritol 4-phosphate (MEP). This is 2-C-methyl-D-erythritol 4-phosphate cytidylyltransferase from Vibrio atlanticus (strain LGP32) (Vibrio splendidus (strain Mel32)).